Consider the following 407-residue polypeptide: MNKLNKVILAYSGGLDTSIIIPWLKENYNCEVIAVCGNVGQKDELDGLEEKAIKTGASKLYMEDLTKEFVEDYIFPTIQAGAIYEGKYLLGTSFARPLIGKRLVEIAKVEGADAICHGCTGKGNDQVRFELAVKAFDPDMKIIAPWRIWDIKSREDEITYAEARNVPIKINHETNYSKDKNIWHLSHEGLDLEDPKNEPKYDEILELSNSLEKAPNEPTYITLTFEKGNAVALNGEKMDAVTLLDELNKIGGKNAIGITDMVENRLVGMKSRGVYETPGGTILYKAHKDLEELCLDKETSHYKEQISLKFADLVYNGLWFTPLREALSEFIKKTQETVTGEIKLKLYKGNIVNAGMTSPYSLYSEEYATFGEDAVYNQNDSAGFITLYGLPTVVKAKMYQSLKKEDK.

10 to 18 contacts ATP; it reads AYSGGLDTS. The L-citrulline site is built by Y88 and S93. G118 provides a ligand contact to ATP. L-aspartate-binding residues include T120, N124, and D125. N124 contacts L-citrulline. Residues R128, S177, S186, E263, and Y275 each coordinate L-citrulline.

It belongs to the argininosuccinate synthase family. Type 1 subfamily. As to quaternary structure, homotetramer.

It is found in the cytoplasm. The enzyme catalyses L-citrulline + L-aspartate + ATP = 2-(N(omega)-L-arginino)succinate + AMP + diphosphate + H(+). It functions in the pathway amino-acid biosynthesis; L-arginine biosynthesis; L-arginine from L-ornithine and carbamoyl phosphate: step 2/3. The sequence is that of Argininosuccinate synthase from Clostridium botulinum (strain Alaska E43 / Type E3).